Reading from the N-terminus, the 411-residue chain is MSILSWIENQRKLKLLNAPKYNHPESDVSQGLWTRCDHCGVILYIKHLKENQRVCFGCGYHLQMSSTERIESLVDANTWRPFDEMVSPCDPLEFRDQKAYTERLKDAQERTGLQDAVQTGTGLLDGIPIALGVMDFHFMGGSMGSVVGEKITRLIEYATQEGLPVILVCASGGARMQEGILSLMQMAKISAALHIHQNCAKLLYISVLTSPTTGGVTASFAMLGDLLFAEPKALIGFAGRRVIEQTLQEQLPDDFQTAEYLLHHGLLDLIVPRSFLKQALSETLTLYKEAPLKEQGRIPYGERGPLTKTREEQLRRFLKSSKTPEYLHIVNDLKELLGFLGQTQTTLYPEKLEFLNNLKTQEQFLQKNDNFFEELLTSTTVKKALNLACGTQTRLNWLNYKLTEFRIRPKF.

A CoA carboxyltransferase N-terminal domain is found at 32 to 302; sequence LWTRCDHCGV…KEQGRIPYGE (271 aa). Cysteine 36, cysteine 39, cysteine 55, and cysteine 58 together coordinate Zn(2+). The C4-type zinc-finger motif lies at 36-58; sequence CDHCGVILYIKHLKENQRVCFGC.

The protein belongs to the AccD/PCCB family. Acetyl-CoA carboxylase is a heterohexamer composed of biotin carboxyl carrier protein, biotin carboxylase and 2 subunits each of ACCase subunit alpha and ACCase plastid-coded subunit beta (accD). Zn(2+) is required as a cofactor.

The protein resides in the plastid. Its subcellular location is the chloroplast stroma. The catalysed reaction is N(6)-carboxybiotinyl-L-lysyl-[protein] + acetyl-CoA = N(6)-biotinyl-L-lysyl-[protein] + malonyl-CoA. It functions in the pathway lipid metabolism; malonyl-CoA biosynthesis; malonyl-CoA from acetyl-CoA: step 1/1. Its function is as follows. Component of the acetyl coenzyme A carboxylase (ACC) complex. Biotin carboxylase (BC) catalyzes the carboxylation of biotin on its carrier protein (BCCP) and then the CO(2) group is transferred by the transcarboxylase to acetyl-CoA to form malonyl-CoA. In Chlorella vulgaris (Green alga), this protein is Acetyl-coenzyme A carboxylase carboxyl transferase subunit beta, chloroplastic.